The sequence spans 193 residues: Cuticle protein 18.7 (193 aa).

Component of the cuticle of migratory locust which contains more than 100 different structural proteins. The chain is Cuticle protein 18.7 from Locusta migratoria (Migratory locust).